Here is a 783-residue protein sequence, read N- to C-terminus: uncharacterized protein (783 aa).

The zn(2)-C6 fungal-type DNA-binding region spans 40–66 (CFNCKARKVRCDGANPCKACASNNLEC).

It is found in the cytoplasm. The protein localises to the nucleus. This is an uncharacterized protein from Schizosaccharomyces pombe (strain 972 / ATCC 24843) (Fission yeast).